Consider the following 364-residue polypeptide: tRNA 2-selenouridine synthase (364 aa).

A Rhodanese domain is found at 14 to 137 (LLADTPLIDV…LRQTAIQATW (124 aa)). The S-selanylcysteine intermediate role is filled by C97.

This sequence belongs to the SelU family. In terms of assembly, monomer.

The catalysed reaction is 5-methylaminomethyl-2-thiouridine(34) in tRNA + selenophosphate + (2E)-geranyl diphosphate + H2O + H(+) = 5-methylaminomethyl-2-selenouridine(34) in tRNA + (2E)-thiogeraniol + phosphate + diphosphate. The enzyme catalyses 5-methylaminomethyl-2-thiouridine(34) in tRNA + (2E)-geranyl diphosphate = 5-methylaminomethyl-S-(2E)-geranyl-thiouridine(34) in tRNA + diphosphate. It carries out the reaction 5-methylaminomethyl-S-(2E)-geranyl-thiouridine(34) in tRNA + selenophosphate + H(+) = 5-methylaminomethyl-2-(Se-phospho)selenouridine(34) in tRNA + (2E)-thiogeraniol. It catalyses the reaction 5-methylaminomethyl-2-(Se-phospho)selenouridine(34) in tRNA + H2O = 5-methylaminomethyl-2-selenouridine(34) in tRNA + phosphate. Its function is as follows. Involved in the post-transcriptional modification of the uridine at the wobble position (U34) of tRNA(Lys), tRNA(Glu) and tRNA(Gln). Catalyzes the conversion of 2-thiouridine (S2U-RNA) to 2-selenouridine (Se2U-RNA). Acts in a two-step process involving geranylation of 2-thiouridine (S2U) to S-geranyl-2-thiouridine (geS2U) and subsequent selenation of the latter derivative to 2-selenouridine (Se2U) in the tRNA chain. This is tRNA 2-selenouridine synthase from Salmonella enteritidis.